The primary structure comprises 357 residues: Hemolysin VllY (357 aa).

VOC domains lie at 12 to 132 (GFEF…FVDR) and 162 to 313 (EIDH…IFTQ). Fe cation-binding residues include His-165, His-243, and Glu-322.

Belongs to the 4HPPD family. The cofactor is Fe cation.

The chain is Hemolysin VllY (vllY) from Vibrio vulnificus (strain CMCP6).